The following is a 464-amino-acid chain: Argininosuccinate lyase (464 aa).

The protein belongs to the lyase 1 family. Argininosuccinate lyase subfamily.

The protein resides in the cytoplasm. It catalyses the reaction 2-(N(omega)-L-arginino)succinate = fumarate + L-arginine. It functions in the pathway amino-acid biosynthesis; L-arginine biosynthesis; L-arginine from L-ornithine and carbamoyl phosphate: step 3/3. The sequence is that of Argininosuccinate lyase from Chlorobium phaeobacteroides (strain DSM 266 / SMG 266 / 2430).